We begin with the raw amino-acid sequence, 196 residues long: Rho-related protein racA (196 aa).

Positions 13, 15, 16, 17, 18, 32, 35, 60, 116, 118, and 159 each coordinate GTP. Threonine 17 provides a ligand contact to Mg(2+). 2 consecutive short sequence motifs (switch) follow at residues 26–37 (NAFPNEYIPTVF) and 57–75 (DTAG…YPQT). Position 35 (threonine 35) interacts with Mg(2+). Cysteine methyl ester is present on cysteine 193. Cysteine 193 is lipidated: S-geranylgeranyl cysteine. Positions 194–196 (LLF) are cleaved as a propeptide — removed in mature form.

It belongs to the small GTPase superfamily. Rho family. Interacts (GTP-bound form) with PAK2 (via CRIB domain). Mg(2+) serves as cofactor.

The protein localises to the cell membrane. Its subcellular location is the cytoplasm. The protein resides in the cytoskeleton. It catalyses the reaction GTP + H2O = GDP + phosphate + H(+). Its activity is regulated as follows. Regulated by guanine nucleotide exchange factors (GEFs) which promote the exchange of bound GDP for free GTP, GTPase activating proteins (GAPs) which increase the GTP hydrolysis activity, and GDP dissociation inhibitors which inhibit the dissociation of the nucleotide from the GTPase. In terms of biological role, small GTPase which cycles between active GTP-bound and inactive GDP-bound states. Involved in cytoskeleton remodeling. Plays a role in phagocytosis of bacteria and host erythrocytes. Involved in capping of surface receptors. May be involved in cytokinesis. The protein is Rho-related protein racA of Entamoeba histolytica (strain ATCC 30459 / HM-1:IMSS / ABRM).